Consider the following 328-residue polypeptide: MIKKRVFSGIQPTGNIHLGNYLGAVKNWVDSQDEFDNIFCIVNSHAITIKQDPALLRAKTYELAAVLLACGIDMKKSKLFIQSEVDEHAALAWILDCNIPMGDMSRMTQFKDKSQKNPKNINIGLFNYPALMAADILLYQTDFVPVGEDQKQHLELTRDVAERFNRDYGETFKIPEPMIPKMGARIMGLDDPTKKMSKSEGKPNHGIALLDTPDEILKKFKKATTDSENLVRFNPEQIGIFNLLTIYQIFTGYSQEVIEAEFEGKGYGIFKVAVAEAVIEGLKPIQERYAKLTKEQGYLEEVLSHGASEVRKIAQKTYKEVKERVGLI.

Residues 11 to 13 and 19 to 20 contribute to the ATP site; these read QPT and GN. Positions 12 to 20 match the 'HIGH' region motif; sequence PTGNIHLGN. Asp-135 provides a ligand contact to L-tryptophan. Residues 147–149, Ile-186, and 195–199 each bind ATP; these read GED and KMSKS. Residues 195–199 carry the 'KMSKS' region motif; that stretch reads KMSKS.

Belongs to the class-I aminoacyl-tRNA synthetase family. In terms of assembly, homodimer.

The protein localises to the cytoplasm. It catalyses the reaction tRNA(Trp) + L-tryptophan + ATP = L-tryptophyl-tRNA(Trp) + AMP + diphosphate + H(+). Catalyzes the attachment of tryptophan to tRNA(Trp). This chain is Tryptophan--tRNA ligase, found in Wolinella succinogenes (strain ATCC 29543 / DSM 1740 / CCUG 13145 / JCM 31913 / LMG 7466 / NCTC 11488 / FDC 602W) (Vibrio succinogenes).